We begin with the raw amino-acid sequence, 91 residues long: Small ribosomal subunit protein bS6 (91 aa).

Belongs to the bacterial ribosomal protein bS6 family.

Its function is as follows. Binds together with bS18 to 16S ribosomal RNA. The sequence is that of Small ribosomal subunit protein bS6 from Leptospira interrogans serogroup Icterohaemorrhagiae serovar copenhageni (strain Fiocruz L1-130).